Reading from the N-terminus, the 417-residue chain is Phosphoglycerate kinase 2 (417 aa).

S4 is modified (phosphoserine). Position 11 is an N6-acetyllysine (K11). 6 residues coordinate (2R)-3-phosphoglycerate: V23, D24, F25, N26, Q38, and R39. K48 carries the N6-acetyllysine modification. Residues S62, H63, G65, and R66 each contribute to the (2R)-3-phosphoglycerate site. An N6-acetyllysine mark is found at K75, K86, and K97. Residues L122 and R123 each contribute to the (2R)-3-phosphoglycerate site. An N6-acetyllysine mark is found at K131 and K146. 2 residues coordinate (2R)-3-phosphoglycerate: H170 and R171. The residue at position 196 (Y196) is a Phosphotyrosine. Position 199 is an N6-acetyllysine (K199). Residue G214 participates in ADP binding. G214 lines the CDP pocket. AMP contacts are provided by A215 and K216. A215 is an ATP binding site. A215 is a Mg(2+) binding site. D219 is a binding site for CDP. Residue D219 coordinates Mg(2+). K220 is a binding site for AMP. Residue K220 coordinates ATP. An ADP-binding site is contributed by G238. G238 provides a ligand contact to CDP. G239 provides a ligand contact to AMP. G239 lines the ATP pocket. 2 positions are modified to N6-acetyllysine: K267 and K291. AMP is bound at residue G313. Residue G313 coordinates ATP. Residues G338, I340, and F343 each contribute to the CDP site. F343 serves as a coordination point for ADP. AMP is bound at residue E344. Residues E344, D375, and T376 each coordinate ATP. D375 is a Mg(2+) binding site.

Belongs to the phosphoglycerate kinase family. In terms of assembly, monomer. Requires Mg(2+) as cofactor. As to expression, testis and sperm. Localized on the principle piece in the sperm (at protein level). Testis-specific.

It is found in the cytoplasm. The enzyme catalyses (2R)-3-phosphoglycerate + ATP = (2R)-3-phospho-glyceroyl phosphate + ADP. Its pathway is carbohydrate degradation; glycolysis; pyruvate from D-glyceraldehyde 3-phosphate: step 2/5. In terms of biological role, essential for sperm motility and male fertility but is not required for the completion of spermatogenesis. This chain is Phosphoglycerate kinase 2 (Pgk2), found in Mus musculus (Mouse).